We begin with the raw amino-acid sequence, 337 residues long: MQFMTISNDNKIVLSIPMLSTLSLNCLVKITGSISQSKQLLVENNLLLSNFEIIYNNLVSIKRQIIYKDIFDKMFSYKLRKHPISLNSFYKDNIFYLKGMYLANLFSDKVSKNINSKCIFGMNSISDIIINMRTQKITHRNPKVLCKKINKLNKYTVDEVVEKGEIFEQSVNYIIIKDKYHPEFFVKIKFETNYIYDFFDIECLEYSCNIGDKDLKVIPKITNPNLSVGKVIDNCRNKKFRILSIGKPIIKHDCTNIIVDENGYVSGSMKNCIDRYSCYGNYILRKYRKLINDGWQCLNEVCDNPVCILAQEDFAEKMYKLRKSYDESVPQLEEVNE.

The protein belongs to the mimivirus R69 family.

This is an uncharacterized protein from Acanthamoeba polyphaga mimivirus (APMV).